Consider the following 341-residue polypeptide: L-threonine 3-dehydrogenase (341 aa).

C38 contacts Zn(2+). Catalysis depends on charge relay system residues T40 and H43. Residues H63, E64, C93, C96, C99, and C107 each contribute to the Zn(2+) site. Residues I175, D195, R200, 262–264 (LGI), and 286–287 (IY) contribute to the NAD(+) site.

The protein belongs to the zinc-containing alcohol dehydrogenase family. Homotetramer. The cofactor is Zn(2+).

The protein resides in the cytoplasm. The enzyme catalyses L-threonine + NAD(+) = (2S)-2-amino-3-oxobutanoate + NADH + H(+). It participates in amino-acid degradation; L-threonine degradation via oxydo-reductase pathway; glycine from L-threonine: step 1/2. Catalyzes the NAD(+)-dependent oxidation of L-threonine to 2-amino-3-ketobutyrate. The sequence is that of L-threonine 3-dehydrogenase from Marinomonas sp. (strain MWYL1).